Here is a 155-residue protein sequence, read N- to C-terminus: Pathogenesis-related protein A (155 aa).

The protein belongs to the BetVI family.

This chain is Pathogenesis-related protein A (PCPR1-1), found in Petroselinum crispum (Parsley).